The chain runs to 638 residues: DNA-directed RNA polymerase I subunit RPA1 (638 aa).

Residues 297 to 317 (EYDEEDDESSGESEVREGDEE) show a composition bias toward acidic residues. The tract at residues 297-321 (EYDEEDDESSGESEVREGDEEQEKK) is disordered.

The protein belongs to the RNA polymerase beta' chain family. Each class of RNA polymerase is assembled from 9 to 14 different polypeptides. This subunit is the largest component of RNA polymerase I.

It localises to the nucleus. The enzyme catalyses RNA(n) + a ribonucleoside 5'-triphosphate = RNA(n+1) + diphosphate. Functionally, DNA-dependent RNA polymerase catalyzes the transcription of DNA into RNA using the four ribonucleoside triphosphates as substrates. RNA polymerase I is essentially used to transcribe ribosomal DNA units. The protein is DNA-directed RNA polymerase I subunit RPA1 (RPA1) of Euplotoides octocarinatus (Freshwater ciliate).